Reading from the N-terminus, the 232-residue chain is Uracil-DNA glycosylase (232 aa).

The active-site Proton acceptor is Asp71.

It belongs to the uracil-DNA glycosylase (UDG) superfamily. UNG family.

Its subcellular location is the cytoplasm. The enzyme catalyses Hydrolyzes single-stranded DNA or mismatched double-stranded DNA and polynucleotides, releasing free uracil.. In terms of biological role, excises uracil residues from the DNA which can arise as a result of misincorporation of dUMP residues by DNA polymerase or due to deamination of cytosine. The protein is Uracil-DNA glycosylase of Azotobacter vinelandii (strain DJ / ATCC BAA-1303).